A 225-amino-acid polypeptide reads, in one-letter code: Probable methylthioribulose-1-phosphate dehydratase (225 aa).

C86 contributes to the substrate binding site. H104 and H106 together coordinate Zn(2+). The active-site Proton donor/acceptor is E127. Residue H183 participates in Zn(2+) binding.

Belongs to the aldolase class II family. MtnB subfamily. Requires Zn(2+) as cofactor.

Its subcellular location is the cytoplasm. The enzyme catalyses 5-(methylsulfanyl)-D-ribulose 1-phosphate = 5-methylsulfanyl-2,3-dioxopentyl phosphate + H2O. It functions in the pathway amino-acid biosynthesis; L-methionine biosynthesis via salvage pathway; L-methionine from S-methyl-5-thio-alpha-D-ribose 1-phosphate: step 2/6. In terms of biological role, catalyzes the dehydration of methylthioribulose-1-phosphate (MTRu-1-P) into 2,3-diketo-5-methylthiopentyl-1-phosphate (DK-MTP-1-P). This Leishmania infantum protein is Probable methylthioribulose-1-phosphate dehydratase.